The chain runs to 422 residues: Cell division protein DivIB (422 aa).

Composition is skewed to basic and acidic residues over residues 1 to 23 and 62 to 75; these read MVDW…KQEE and EEAK…DQEQ. The segment at 1–77 is disordered; sequence MVDWDKEAQR…DFAKDQEQKH (77 aa). Over 1-109 the chain is Cytoplasmic; sequence MVDWDKEAQR…LQLKSVSWSR (109 aa). The chain crosses the membrane as a helical span at residues 110-130; that stretch reads LILAAAFLFMIIFSAFWLSPL. A POTRA domain is found at 131 to 202; sequence NRIATIEVSG…RTVEVNVQEF (72 aa). At 131 to 422 the chain is on the extracellular side; that stretch reads NRIATIEVSG…TVTQTRSSNS (292 aa). The segment at 329 to 422 is disordered; the sequence is NPLNDPFASP…TVTQTRSSNS (94 aa). The segment covering 338-379 has biased composition (basic and acidic residues); it reads PEEKASYQEKVDQAKEKSKEKQAKADKHSSESKLGDKPKPRG. Residues 389 to 422 are compositionally biased toward low complexity; the sequence is TSSQRQTSSQSSPRPGTNSSQQSSTVTQTRSSNS.

The protein belongs to the FtsQ/DivIB family. DivIB subfamily.

It is found in the cell membrane. Its function is as follows. Cell division protein that may be involved in stabilizing or promoting the assembly of the division complex. In Aerococcus urinae (strain CCUG 59500 / ACS-120-V-Col10a), this protein is Cell division protein DivIB.